Reading from the N-terminus, the 255-residue chain is Acetyl-coenzyme A carboxylase carboxyl transferase subunit alpha (255 aa).

The region spanning 1–235 (MNIAKIVREA…KKELQTELAR (235 aa)) is the CoA carboxyltransferase C-terminal domain.

The protein belongs to the AccA family. As to quaternary structure, acetyl-CoA carboxylase is a heterohexamer composed of biotin carboxyl carrier protein (AccB), biotin carboxylase (AccC) and two subunits each of ACCase subunit alpha (AccA) and ACCase subunit beta (AccD).

The protein resides in the cytoplasm. It carries out the reaction N(6)-carboxybiotinyl-L-lysyl-[protein] + acetyl-CoA = N(6)-biotinyl-L-lysyl-[protein] + malonyl-CoA. Its pathway is lipid metabolism; malonyl-CoA biosynthesis; malonyl-CoA from acetyl-CoA: step 1/1. In terms of biological role, component of the acetyl coenzyme A carboxylase (ACC) complex. First, biotin carboxylase catalyzes the carboxylation of biotin on its carrier protein (BCCP) and then the CO(2) group is transferred by the carboxyltransferase to acetyl-CoA to form malonyl-CoA. The chain is Acetyl-coenzyme A carboxylase carboxyl transferase subunit alpha from Streptococcus pneumoniae serotype 19F (strain G54).